Here is a 363-residue protein sequence, read N- to C-terminus: MKITNDNAATINYWLAIVEPFLTSDEDRNSDDIIRKFRAVVAEHGDTEEVDPEVFFAIFSILATKYGRVYSKKVEELNESLKAAILAGAEAEDLRNKLKDISQRYASQLEITADREQQLESLKKKGHEQPLTGSGSSEPVHAESAHAPQLHVVNDLQQFYIPFNEYPSLTQSIGTSDIANDEHLKRVQLTLKITDTKVFSRTGFEFAISCGSRSTSDKDPYDGIIKISGKSHMRKDIAYAIRTSGITVRQFCAAFANLYWNFNLARNTPPENWRKKGFTEGTKFAAFDFFYAVGSNAAIPTEADGSVRLIRPPTNEENEANSAMRYADIYEQNSKTAGHVTSSPLYNRGSSYESKNKAKLLEM.

Residues 72 to 111 (KKVEELNESLKAAILAGAEAEDLRNKLKDISQRYASQLEI) are a coiled coil. The segment at 122–144 (LKKKGHEQPLTGSGSSEPVHAES) is disordered.

The protein localises to the virion. This is Capsid protein from Citrus leaf blotch virus (isolate Nagami kumquat/France/SRA-153/1984) (CLBV).